The sequence spans 429 residues: MLSLDVLLLCAISGFQLLISADGDPMIEVFKWKQLDFYNRGDGYKDLWNRICIPDSHFYNSRKCLGSSSSGSFIQYNNVPQGVTHFRGRLFVTVPRRQPGIPSTLNYIDLAKDGWSQSPHLRAYPNLAVNQYNASEQNLVSVYRTSVDVCGRLWFVDTGMLEFPNNRQQIRHPSIWVIDLANDRLLKRFEIPQSIVEIGRGLASITIDVGARRCNDAYAYIPDLVNRRLHVYHLRSDRIWSFEHSFFNFDPLSDNLNIGGQTFRWDDGIFSATLGSYKPDGSRDVFFHPMASTNEFVVSNRVLQQEFNAARSDHGDDFHLLGTRGPSTQSTMHKYDPRTGVIFFAEVQKSGVGCWKTSKPFSTENHGSVYSNSSEMIYPSDLTIDEEGYIWVMSNSMPIFVYSKLDVEKYNFRIWRQSTLLAKRGTVCE.

The N-terminal stretch at 1 to 23 (MLSLDVLLLCAISGFQLLISADG) is a signal peptide. 2 N-linked (GlcNAc...) asparagine glycosylation sites follow: Asn133 and Asn372.

It belongs to the major royal jelly protein family.

It localises to the secreted. The enzyme catalyses L-dopachrome = 5,6-dihydroxyindole-2-carboxylate. It participates in pigment biosynthesis; melanin biosynthesis. Functionally, tautomerization of L-dopachrome with decarboxylation to give 5,6-dihydroxyindole (DHI). Also catalyzes the tautomerization of the methyl ester of L-dopachrome and dopamine chrome. May play a role in melanization reactions during late pupal and adult stages. May play a role in melanization reactions during larval and early pupal stages. This chain is L-dopachrome tautomerase yellow-f, found in Drosophila melanogaster (Fruit fly).